The chain runs to 507 residues: Probable cytosol aminopeptidase (507 aa).

Mn(2+) contacts are provided by Lys-269 and Asp-274. Lys-281 is a catalytic residue. Asp-292, Asp-351, and Glu-353 together coordinate Mn(2+). Arg-355 is a catalytic residue.

Belongs to the peptidase M17 family. Requires Mn(2+) as cofactor.

Its subcellular location is the cytoplasm. It catalyses the reaction Release of an N-terminal amino acid, Xaa-|-Yaa-, in which Xaa is preferably Leu, but may be other amino acids including Pro although not Arg or Lys, and Yaa may be Pro. Amino acid amides and methyl esters are also readily hydrolyzed, but rates on arylamides are exceedingly low.. The enzyme catalyses Release of an N-terminal amino acid, preferentially leucine, but not glutamic or aspartic acids.. Its function is as follows. Presumably involved in the processing and regular turnover of intracellular proteins. Catalyzes the removal of unsubstituted N-terminal amino acids from various peptides. This is Probable cytosol aminopeptidase from Chromohalobacter salexigens (strain ATCC BAA-138 / DSM 3043 / CIP 106854 / NCIMB 13768 / 1H11).